Consider the following 107-residue polypeptide: Nucleoid-associated protein CE0210 (107 aa).

It belongs to the YbaB/EbfC family. Homodimer.

Its subcellular location is the cytoplasm. The protein resides in the nucleoid. Its function is as follows. Binds to DNA and alters its conformation. May be involved in regulation of gene expression, nucleoid organization and DNA protection. This chain is Nucleoid-associated protein CE0210, found in Corynebacterium efficiens (strain DSM 44549 / YS-314 / AJ 12310 / JCM 11189 / NBRC 100395).